The sequence spans 94 residues: Integration host factor subunit beta (94 aa).

This sequence belongs to the bacterial histone-like protein family. As to quaternary structure, heterodimer of an alpha and a beta chain.

Functionally, this protein is one of the two subunits of integration host factor, a specific DNA-binding protein that functions in genetic recombination as well as in transcriptional and translational control. The sequence is that of Integration host factor subunit beta from Caulobacter sp. (strain K31).